The primary structure comprises 153 residues: Coiled-coil-helix-coiled-coil-helix domain-containing protein 2 (153 aa).

Disordered stretches follow at residues 1 to 51 and 78 to 106; these read MPRG…AAPR and HAIT…QGAQ. The segment covering 14 to 51 has biased composition (low complexity); that stretch reads PPASRAPQMRAAPRRAPAAQPPAAAAPSAVGSPAAAPR. The CHCH domain occupies 113–153; sequence FGPCSLEIKQFLECAQNQSDVKLCEGFNEVLRQCRIANGLM. 2 short sequence motifs (cx9C motif) span residues 116 to 126 and 136 to 146; these read CSLEIKQFLEC and CEGFNEVLRQC. Cystine bridges form between C116-C146 and C126-C136.

In terms of assembly, interacts with RBPJ.

Its subcellular location is the nucleus. The protein localises to the mitochondrion. It localises to the mitochondrion intermembrane space. Transcription factor. Binds to the oxygen responsive element of COX4I2 and activates its transcription under hypoxia conditions (4% oxygen), as well as normoxia conditions (20% oxygen). In Mus musculus (Mouse), this protein is Coiled-coil-helix-coiled-coil-helix domain-containing protein 2 (Chchd2).